A 152-amino-acid chain; its full sequence is Endoribonuclease YbeY (152 aa).

Positions 113, 117, and 123 each coordinate Zn(2+).

The protein belongs to the endoribonuclease YbeY family. Requires Zn(2+) as cofactor.

Its subcellular location is the cytoplasm. Functionally, single strand-specific metallo-endoribonuclease involved in late-stage 70S ribosome quality control and in maturation of the 3' terminus of the 16S rRNA. This chain is Endoribonuclease YbeY, found in Pseudoalteromonas atlantica (strain T6c / ATCC BAA-1087).